The following is a 490-amino-acid chain: MQPAMMMFSSKYWARRGFSLDSAVPEEHQLLGSSTLNKPNSGKNDDKGNKGSSKREAATESGKTAVVFSLKNEVGGLVKALRLFQEKRVNMVHIESRKSRRRSSEVEIFVDCECGKTEFNELIQLLKFQTTIVTLNPPENIWTEEEELEDVPWFPRKISELDKCSHRVLMYGSELDADHPGFKDNVYRQRRKYFVDVAMGYKYGQPIPRVEYTEEETKTWGVVFRELSKLYPTHACREYLKNFPLLTKYCGYREDNVPQLEDVSMFLKERSGFTVRPVAGYLSPRDFLAGLAYRVFHCTQYIRHGSDPLYTPEPDTCHELLGHVPLLADPKFAQFSQEIGLASLGASDEDVQKLATCYFFTIEFGLCKQEGQLRAYGAGLLSSIGELKHALSDKACVKAFDPKTTCLQECLITTFQEAYFVSESFEEAKEKMRDFAKSITRPFSVYFNPYTQSIEILKDTRSIENVVQDLRSDLNTVCDALNKMNQYLGI.

Residue serine 19 is modified to Phosphoserine. Residues 31-42 (LGSSTLNKPNSG) show a composition bias toward polar residues. Residues 31 to 58 (LGSSTLNKPNSGKNDDKGNKGSSKREAA) are disordered. Residues 43–58 (KNDDKGNKGSSKREAA) show a composition bias toward basic and acidic residues. An ACT domain is found at 65-140 (AVVFSLKNEV…TIVTLNPPEN (76 aa)). Histidine 318, histidine 323, and glutamate 363 together coordinate Fe cation.

This sequence belongs to the biopterin-dependent aromatic amino acid hydroxylase family. As to quaternary structure, interacts with DNAJC12. Fe(2+) serves as cofactor. Brain specific.

It catalyses the reaction (6R)-L-erythro-5,6,7,8-tetrahydrobiopterin + L-tryptophan + O2 = 5-hydroxy-L-tryptophan + (4aS,6R)-4a-hydroxy-L-erythro-5,6,7,8-tetrahydrobiopterin. It functions in the pathway aromatic compound metabolism; serotonin biosynthesis; serotonin from L-tryptophan: step 1/2. The chain is Tryptophan 5-hydroxylase 2 (TPH2) from Homo sapiens (Human).